The primary structure comprises 194 residues: Cysteine and glycine-rich protein 2 (194 aa).

The region spanning 10 to 61 is the LIM zinc-binding 1 domain; it reads CGACGRTVYHAEEVQCDGRSFHRCCFLCMVCRKNLDSTTVAIHDAEVYCKSC. A Nuclear localization signal motif is present at residues 64 to 69; that stretch reads KKYGPK. Positions 120 to 171 constitute an LIM zinc-binding 2 domain; sequence CSRCGDSVYAAEKVIGAGKPWHKNCFRCAKCGKSLESTTLTEKEGEIYCKGC.

The protein localises to the nucleus. Totally down-regulated in transformed cells. May therefore take part in the control of cell growth and differentiation. The sequence is that of Cysteine and glycine-rich protein 2 (CSRP2) from Gallus gallus (Chicken).